We begin with the raw amino-acid sequence, 165 residues long: RNA pyrophosphohydrolase (165 aa).

A Nudix hydrolase domain is found at 13-154; that stretch reads PYRQGVGIML…KRPVYEQVVA (142 aa). The Nudix box signature appears at 46-67; it reads GGIDAGEDPETAAWREMEEEIG.

The protein belongs to the Nudix hydrolase family. RppH subfamily. A divalent metal cation is required as a cofactor.

In terms of biological role, accelerates the degradation of transcripts by removing pyrophosphate from the 5'-end of triphosphorylated RNA, leading to a more labile monophosphorylated state that can stimulate subsequent ribonuclease cleavage. The protein is RNA pyrophosphohydrolase of Rhodospirillum rubrum (strain ATCC 11170 / ATH 1.1.1 / DSM 467 / LMG 4362 / NCIMB 8255 / S1).